The following is a 224-amino-acid chain: Protein PLANT CADMIUM RESISTANCE 6 (224 aa).

A helical membrane pass occupies residues 131–151 (GMLYGLICCLFAIPCVYTCTF).

This sequence belongs to the cornifelin family.

The protein resides in the membrane. In terms of biological role, may be involved in heavy metals transport. The protein is Protein PLANT CADMIUM RESISTANCE 6 (PCR6) of Arabidopsis thaliana (Mouse-ear cress).